We begin with the raw amino-acid sequence, 212 residues long: Putative 3-methyladenine DNA glycosylase (212 aa).

The protein belongs to the DNA glycosylase MPG family.

The polypeptide is Putative 3-methyladenine DNA glycosylase (Frankia casuarinae (strain DSM 45818 / CECT 9043 / HFP020203 / CcI3)).